The chain runs to 191 residues: Chromobox protein homolog 5 (191 aa).

The segment at 1–21 (MGKKTKRTADSSSSEDEEEYV) is disordered. Phosphoserine occurs at positions 11, 12, 13, and 14. In terms of domain architecture, Chromo 1 spans 20–78 (YVVEKVLDRRMVKGQVEYLLKWKGFSEEHNTWEPEKNLDCPELISEFMKKYKKMKEGEN). Lys32 is covalently cross-linked (Glycyl lysine isopeptide (Lys-Gly) (interchain with G-Cter in SUMO2)). An N6-acetyllysine modification is found at Lys40. The tract at residues 70-117 (YKKMKEGENNKPREKSEGNKRKSSFSNSADDIKSKKKREQSNDIARGF) is disordered. The span at 73–89 (MKEGENNKPREKSEGNK) shows a compositional bias: basic and acidic residues. A Glycyl lysine isopeptide (Lys-Gly) (interchain with G-Cter in SUMO2) cross-link involves residue Lys91. Ser92, Ser93, Ser95, and Ser97 each carry phosphoserine. Glycyl lysine isopeptide (Lys-Gly) (interchain with G-Cter in SUMO2) cross-links involve residues Lys102, Lys106, Lys154, and Lys184. In terms of domain architecture, Chromo 2; shadow subtype spans 121–179 (LEPEKIIGATDSCGDLMFLMKWKDTDEADLVLAKEANVKCPQIVIAFYEERLTWHAYPE).

In terms of assembly, homodimer. Interacts with histone H3 methylated at 'Lys-9'. Interacts (via Chromo 2; shadow subtype domain) with the MIS12 complex subunit NSL1; the interaction is direct, involves dimeric CBX5, and occurs during interphase. Interacts with POGZ; POGZ and PXVXL motif-containing proteins such as INCENP and TRIM28 compete for interaction with CBX5. Interacts with LRIF1 (via PxVxL motif). Interacts with INCENP. Interacts with TRIM24. Interacts (via the chromoshadow domain) with ATRX; the interaction is direct. Interacts (via the chromoshadow domain) with CHAF1A; the interaction is direct. Interacts (via the chromoshadow domain) with LBR; the interaction is direct. Interacts (via the chromoshadow domain) with NIPBL; the interaction is direct. Interacts (via the chromoshadow domain) with SP100; the interaction is direct. Interacts (via the chromoshadow domain) with STAM2; the interaction is direct. Interacts (via the chromoshadow domain) with TRIM28; the interaction is direct. Interacts (via the chromoshadow domain) with CBX3; the interaction is direct. Interacts with PRR14 (via N-terminus). Interacts with RRP1B. Interacts with HNRNPU (via C-terminus); this interaction is, at least in part, RNA-dependent. Interacts with ZNF263; recruited to the SIX3 promoter along with other proteins involved in chromatin modification and transcriptional corepression where it contributes to transcriptional repression. Interacts with AURKB during mitosis. Interacts with CHAMP1. Interacts with BAHD1. Interacts with HP1BP3. Interacts with CHD3. Interacts with CHD4. Interacts with SMYD5. Interacts with KMT5B. Interacts with KMT5C. Phosphorylation of HP1 and LBR may be responsible for some of the alterations in chromatin organization and nuclear structure which occur at various times during the cell cycle. Phosphorylated during interphase and possibly hyper-phosphorylated during mitosis. Post-translationally, ubiquitinated.

It is found in the nucleus. It localises to the chromosome. The protein resides in the centromere. Its function is as follows. Component of heterochromatin that recognizes and binds histone H3 tails methylated at 'Lys-9' (H3K9me), leading to epigenetic repression. In contrast, it is excluded from chromatin when 'Tyr-41' of histone H3 is phosphorylated (H3Y41ph). May contribute to the association of heterochromatin with the inner nuclear membrane by interactions with the lamin-B receptor (LBR). Involved in the formation of kinetochore through interaction with the MIS12 complex subunit NSL1. Required for the formation of the inner centromere. Component of heterochromatin that recognizes and binds histone H3 tails methylated at 'Lys-9' (H3K9me), leading to epigenetic repression. In contrast, it is excluded from chromatin when 'Tyr-41' of histone H3 is phosphorylated (H3Y41ph). Can interact with lamin-B receptor (LBR). This interaction can contribute to the association of the heterochromatin with the inner nuclear membrane. Involved in the formation of functional kinetochore through interaction with MIS12 complex proteins. The polypeptide is Chromobox protein homolog 5 (Cbx5) (Mus musculus (Mouse)).